Here is a 234-residue protein sequence, read N- to C-terminus: Enterobactin synthase component D (234 aa).

Mg(2+)-binding residues include aspartate 107, glutamate 109, and glutamate 152.

It belongs to the P-Pant transferase superfamily. EntD family. As to quaternary structure, entB, EntD, EntE, and EntF form a multienzyme complex called enterobactin synthase. Mg(2+) is required as a cofactor.

Its subcellular location is the membrane. It catalyses the reaction apo-[aryl-carrier protein] + CoA = holo-[aryl-carrier protein] + adenosine 3',5'-bisphosphate + H(+). It carries out the reaction apo-[peptidyl-carrier protein] + CoA = holo-[peptidyl-carrier protein] + adenosine 3',5'-bisphosphate + H(+). Its pathway is siderophore biosynthesis; enterobactin biosynthesis. Its function is as follows. Involved in the biosynthesis of the siderophore enterobactin (enterochelin), which is a macrocyclic trimeric lactone of N-(2,3-dihydroxybenzoyl)-serine. The serine trilactone serves as a scaffolding for the three catechol functionalities that provide hexadentate coordination for the tightly ligated iron(2+) atoms. Plays an essential role in the assembly of the enterobactin by catalyzing the transfer of the 4'-phosphopantetheine (Ppant) moiety from coenzyme A to the apo-domains of both EntB (ArCP domain) and EntF (PCP domain) to yield their holo-forms which make them competent for the activation of 2,3-dihydroxybenzoate (DHB) and L-serine, respectively. The protein is Enterobactin synthase component D of Salmonella typhimurium (strain LT2 / SGSC1412 / ATCC 700720).